We begin with the raw amino-acid sequence, 46 residues long: Transcriptional regulator SEHBP (46 aa).

In terms of assembly, interacts with histone H2B. Also interacts with chromatin-binding proteins HMGN1 and HMGN3.

It is found in the nucleus. The protein resides in the cytoplasm. In terms of biological role, plays a role in transcription regulation. This chain is Transcriptional regulator SEHBP, found in Homo sapiens (Human).